A 319-amino-acid chain; its full sequence is Shiga-like toxin 2 subunit A (319 aa).

An N-terminal signal peptide occupies residues 1 to 22; that stretch reads MKCILFKWVLCLLLGFSSVSYS. The tract at residues 23 to 272 is A1; that stretch reads REFTIDFSTQ…CHHQGARSVR (250 aa). The active site involves glutamate 189. Residues cysteine 263 and cysteine 282 are joined by a disulfide bond. An A2 region spans residues 273–314; the sequence is AVNEESQPECQITGDRPVIKINNTLWESNTAAAFLNRKSQFL.

It belongs to the ribosome-inactivating protein family. As to quaternary structure, shiga-like toxin contains a single A subunit and multiple copies of a B subunit.

The protein localises to the secreted. The enzyme catalyses Endohydrolysis of the N-glycosidic bond at one specific adenosine on the 28S rRNA.. Functionally, the A subunit is responsible for inhibiting protein synthesis through the catalytic inactivation of 60S ribosomal subunits. After endocytosis, the A subunit is cleaved by furin in two fragments, A1 and A2: A1 is the catalytically active fragment, and A2 is essential for holotoxin assembly with the B subunits. In Escherichia coli O157:H7 (Bacteriophage 933W), this protein is Shiga-like toxin 2 subunit A (stxA2).